We begin with the raw amino-acid sequence, 870 residues long: DNA mismatch repair protein MutS (870 aa).

617 to 624 (GPNMAGKS) is a binding site for ATP.

The protein belongs to the DNA mismatch repair MutS family.

Its function is as follows. This protein is involved in the repair of mismatches in DNA. It is possible that it carries out the mismatch recognition step. This protein has a weak ATPase activity. The sequence is that of DNA mismatch repair protein MutS from Phocaeicola vulgatus (strain ATCC 8482 / DSM 1447 / JCM 5826 / CCUG 4940 / NBRC 14291 / NCTC 11154) (Bacteroides vulgatus).